The primary structure comprises 51 residues: Sperm protamine P1 (51 aa).

Belongs to the protamine P1 family. As to expression, testis.

Its subcellular location is the nucleus. The protein resides in the chromosome. In terms of biological role, protamines substitute for histones in the chromatin of sperm during the haploid phase of spermatogenesis. They compact sperm DNA into a highly condensed, stable and inactive complex. The polypeptide is Sperm protamine P1 (PRM1) (Nasalis larvatus (Proboscis monkey)).